A 116-amino-acid polypeptide reads, in one-letter code: Ribonuclease P protein component (116 aa).

The protein belongs to the RnpA family. In terms of assembly, consists of a catalytic RNA component (M1 or rnpB) and a protein subunit.

The enzyme catalyses Endonucleolytic cleavage of RNA, removing 5'-extranucleotides from tRNA precursor.. In terms of biological role, RNaseP catalyzes the removal of the 5'-leader sequence from pre-tRNA to produce the mature 5'-terminus. It can also cleave other RNA substrates such as 4.5S RNA. The protein component plays an auxiliary but essential role in vivo by binding to the 5'-leader sequence and broadening the substrate specificity of the ribozyme. The polypeptide is Ribonuclease P protein component (Leuconostoc citreum (strain KM20)).